We begin with the raw amino-acid sequence, 400 residues long: Enoyl-[acyl-carrier-protein] reductase [NADH] (400 aa).

NAD(+)-binding positions include glycine 48 to tyrosine 53, phenylalanine 74 to glutamate 75, aspartate 111 to alanine 112, and leucine 139 to alanine 140. Tyrosine 225 provides a ligand contact to substrate. Residue tyrosine 235 is the Proton donor of the active site. NAD(+) is bound by residues lysine 244 and valine 273 to threonine 275.

The protein belongs to the TER reductase family. As to quaternary structure, monomer.

The enzyme catalyses a 2,3-saturated acyl-[ACP] + NAD(+) = a (2E)-enoyl-[ACP] + NADH + H(+). It functions in the pathway lipid metabolism; fatty acid biosynthesis. In terms of biological role, involved in the final reduction of the elongation cycle of fatty acid synthesis (FAS II). Catalyzes the reduction of a carbon-carbon double bond in an enoyl moiety that is covalently linked to an acyl carrier protein (ACP). The chain is Enoyl-[acyl-carrier-protein] reductase [NADH] from Burkholderia lata (strain ATCC 17760 / DSM 23089 / LMG 22485 / NCIMB 9086 / R18194 / 383).